We begin with the raw amino-acid sequence, 48 residues long: Large ribosomal subunit protein bL32 (48 aa).

A disordered region spans residues 28-48; sequence VKDKDGSWKMPHRINKTTGEY.

This sequence belongs to the bacterial ribosomal protein bL32 family.

The protein is Large ribosomal subunit protein bL32 of Campylobacter concisus (strain 13826).